A 426-amino-acid polypeptide reads, in one-letter code: Glutamyl-tRNA reductase (426 aa).

Substrate is bound by residues 49–52, S109, 114–116, and Q120; these read TCNR and EGQ. C50 acts as the Nucleophile in catalysis. 189–194 lines the NADP(+) pocket; sequence GAGETG.

It belongs to the glutamyl-tRNA reductase family. In terms of assembly, homodimer.

It catalyses the reaction (S)-4-amino-5-oxopentanoate + tRNA(Glu) + NADP(+) = L-glutamyl-tRNA(Glu) + NADPH + H(+). It functions in the pathway porphyrin-containing compound metabolism; protoporphyrin-IX biosynthesis; 5-aminolevulinate from L-glutamyl-tRNA(Glu): step 1/2. Its pathway is porphyrin-containing compound metabolism; chlorophyll biosynthesis. In terms of biological role, catalyzes the NADPH-dependent reduction of glutamyl-tRNA(Glu) to glutamate 1-semialdehyde (GSA). The protein is Glutamyl-tRNA reductase of Prosthecochloris aestuarii (strain DSM 271 / SK 413).